We begin with the raw amino-acid sequence, 59 residues long: Large ribosomal subunit protein bL32 (59 aa).

Residues 1-15 (MAVPKRKTSKSKRDM) are compositionally biased toward basic residues. The segment at 1–21 (MAVPKRKTSKSKRDMRRASNS) is disordered.

This sequence belongs to the bacterial ribosomal protein bL32 family.

This is Large ribosomal subunit protein bL32 from Alkaliphilus metalliredigens (strain QYMF).